The following is a 547-amino-acid chain: MFS-type transporter ungB (547 aa).

The next 14 membrane-spanning stretches (helical) occupy residues 14-34, 50-70, 80-100, 111-131, 138-158, 169-189, 210-230, 238-258, 279-299, 316-336, 343-363, 366-386, 392-412, and 475-495; these read LLVT…ETVL, DVGW…MAWG, WVFL…GVSP, IAGL…SNTI, IYLG…PVIG, WCFF…VFCL, LLGS…LEWG, SWRV…FAVV, LGLI…VYYL, LAIL…GILV, TPFL…LSSL, ASGL…IGLG, VVPS…TLCF, and AVSE…LGSA. Positions 503 to 547 are disordered; that stretch reads PGHKEATEKVEGEGQGQGQQQEQDQGQGWGEVGESHALAHPTADK. Residues 504–514 are compositionally biased toward basic and acidic residues; the sequence is GHKEATEKVEG.

It belongs to the major facilitator superfamily. TCR/Tet family.

Its subcellular location is the membrane. In terms of biological role, MFS-type transporter; part of the gene cluster that mediates the biosynthesis of the unguisins, gamma-aminobutyric acid (GABA)-containing fungal cyclic heptapeptides with the amino acid sequence cyclo-(D-Ala1-D-Val2-L-Phe3-D-Val4-D-Ala5-D-Trp6-GABA7) for unguisin A and cyclo-(D-Ala1-D-Val2-L-Leu3-D-Val4-D-Ala5-D-Trp6-GABA7) for unguisin B. May be involved in the secretion of unguisins. The chain is MFS-type transporter ungB from Aspergillus violaceofuscus (strain CBS 115571).